The chain runs to 523 residues: MANVGLQFQASAGDSDPQSRPLLLLGQLHHLHRVPWSHVRGKLQPRVTEELWQAALSTLNPNPTDSCPLYLNYATVAALPCRVSRHNSPSAAHFITRLVRTCLPPGAHRCIVMVCEQPEVFASACALARAFPLFTHRSGASRRLEKKTVTVEFFLVGQDNGPVEVSTLQCLANATDGVRLAARIVDTPCNEMNTDTFLEEINKVGKELGIIPTIIRDEELKTRGFGGIYGVGKAALHPPALAVLSHTPDGATQTIAWVGKGIVYDTGGLSIKGKTTMPGMKRDCGGAAAVLGAFRAAIKQGFKDNLHAVFCLAENSVGPNATRPDDIHLLYSGKTVEINNTDAEGRLVLADGVSYACKDLGADIILDMATLTGAQGIATGKYHAAVLTNSAEWEAACVKAGRKCGDLVHPLVYCPELHFSEFTSAVADMKNSVADRDNSPSSCAGLFIASHIGFDWPGVWVHLDIAAPVHAGERATGFGVALLLALFGRASEDPLLNLVSPLGCEVDVEEGDLGRDSKRRRLV.

Lysine 260 and aspartate 265 together coordinate Zn(2+). Lysine 272 is a catalytic residue. Zn(2+) contacts are provided by aspartate 283, aspartate 342, and glutamate 344. The active site involves arginine 346.

It belongs to the peptidase M17 family. Requires Zn(2+) as cofactor. Mn(2+) is required as a cofactor. Ubiquitously expressed.

Functionally, probably catalyzes the removal of unsubstituted N-terminal amino acids from various peptides. This Homo sapiens (Human) protein is Probable aminopeptidase NPEPL1 (NPEPL1).